We begin with the raw amino-acid sequence, 77 residues long: Surfactant-associated protein 2 (77 aa).

The first 19 residues, 1–19 (MESLMRLFLLLALLSSSHA), serve as a signal peptide directing secretion. Asparagine 61 carries N-linked (GlcNAc...) asparagine glycosylation.

N-glycosylated. In terms of tissue distribution, expressed in lung, and specifically in alveolar type II epithelial cells.

It is found in the secreted. The protein localises to the cytoplasmic vesicle. Its subcellular location is the secretory vesicle. The protein resides in the golgi apparatus. In terms of biological role, putative surfactant protein. This chain is Surfactant-associated protein 2, found in Mus musculus (Mouse).